The chain runs to 132 residues: Small ribosomal subunit protein uS8c (132 aa).

It belongs to the universal ribosomal protein uS8 family. Part of the 30S ribosomal subunit.

It is found in the plastid. The protein localises to the chloroplast. Its function is as follows. One of the primary rRNA binding proteins, it binds directly to 16S rRNA central domain where it helps coordinate assembly of the platform of the 30S subunit. This is Small ribosomal subunit protein uS8c (rps8) from Cycas taitungensis (Prince sago).